The sequence spans 460 residues: Lipase member H (460 aa).

An N-terminal signal peptide occupies residues 1–24 (MLLRFYFNGLLFVGCLLSWGRSDT). N-linked (GlcNAc...) asparagine glycans are attached at residues Asn-67 and Asn-75. The active-site Nucleophile is the Ser-163. N-linked (GlcNAc...) asparagine glycosylation is present at Asn-177. Asp-187 functions as the Charge relay system in the catalytic mechanism. An intrachain disulfide couples Cys-242 to Cys-255. Catalysis depends on His-257, which acts as the Charge relay system. 2 disulfides stabilise this stretch: Cys-279/Cys-290 and Cys-293/Cys-301. Asn-289 carries an N-linked (GlcNAc...) asparagine glycan. A glycan (N-linked (GlcNAc...) asparagine) is linked at Asn-366. Cys-436 and Cys-455 are joined by a disulfide.

It belongs to the AB hydrolase superfamily. Lipase family.

It is found in the secreted. It localises to the cell membrane. The catalysed reaction is 1-hexadecanoyl-2-(9Z-octadecenoyl)-sn-glycero-3-phosphate + H2O = 2-(9Z-octadecenoyl)-sn-glycero-3-phosphate + hexadecanoate + H(+). Hydrolyzes specifically phosphatidic acid (PA) to produce 2-acyl lysophosphatidic acid (LPA; a potent bioactive lipid mediator) and fatty acid. Does not hydrolyze other phospholipids, like phosphatidylserine (PS), phosphatidylcholine (PC) and phosphatidylethanolamine (PE) or triacylglycerol (TG). This is Lipase member H (liph) from Xenopus tropicalis (Western clawed frog).